Consider the following 240-residue polypeptide: Venom hemolysin-like protein 1 (240 aa).

The N-terminal stretch at 1–18 is a signal peptide; it reads MQYKLILLVVGLFQASLA. Residues 25–50 are disordered; the sequence is ESVPHPSKDVAPPDTQDSSTQTEVTT. Over residues 39–50 the composition is skewed to polar residues; sequence TQDSSTQTEVTT.

In terms of tissue distribution, expressed by the venom gland (anterior main gland) (at protein level).

It is found in the secreted. The chain is Venom hemolysin-like protein 1 from Platymeris rhadamanthus (Red spot assassin bug).